The sequence spans 289 residues: uncharacterized protein (289 aa).

Positions 1 to 58 (MDEKDWILLKILHEEQSVTKTAERLFTSQPSITYRLKKIEEIFGIELFTKRHKGITFT) constitute an HTH lysR-type domain. Positions 18–37 (VTKTAERLFTSQPSITYRLK) form a DNA-binding region, H-T-H motif.

Belongs to the LysR transcriptional regulatory family.

This is an uncharacterized protein from Bacillus subtilis (strain 168).